A 332-amino-acid polypeptide reads, in one-letter code: D-xylose-binding periplasmic protein (332 aa).

A signal peptide spans 1–23; it reads MKIKSALLTLVGALTVFSSSAHS.

This sequence belongs to the bacterial solute-binding protein 2 family.

The protein localises to the periplasm. Involved in the high-affinity D-xylose membrane transport system. Binds with high affinity to xylose. The chain is D-xylose-binding periplasmic protein (xylF) from Haemophilus influenzae (strain ATCC 51907 / DSM 11121 / KW20 / Rd).